The following is a 132-amino-acid chain: MDSRTGELITAHQAENGVYIWELENPLYFKIHRVEDPLYTRTRVYHVQIRFNHNLRKALHLHKAYLNFQVWTTSMTASGSIYLARFRYLVNMYLDQLGVISINNVVRAVRFATNRVYVNHVLENHSIKFKFY.

It belongs to the geminiviridae replication enhancer protein family. Homooligomer. Interacts with the replication-associated protein (REP). Interacts with host proliferating cell nuclear antigen (PCNA). Interacts with host retinoblastoma-related protein 1 (RBR1), and may thereby deregulate the host cell cycle. Oligomerization and interaction with PCNA are necessary for optimal replication enhancement.

Its function is as follows. Increases viral DNA accumulation. Enhances infectivity and symptom expression. The chain is Replication enhancer protein from Tomato mottle virus (isolate Florida) (ToMoV).